The following is a 133-amino-acid chain: Brain natriuretic peptide (133 aa).

Residues 1–22 (MVVSFVSICGLLLIFNLPLSTS) form the signal peptide. Residues 44–53 (SMSEETEEDQ) show a composition bias toward acidic residues. Disordered regions lie at residues 44 to 76 (SMSEETEEDQMVPANSESLEPVGSMKQTANRDQ) and 93 to 112 (TRKNVQNDSSRRSSSCFGRR). Residues C108 and C124 are joined by a disulfide bond.

It belongs to the natriuretic peptide family.

It is found in the secreted. In terms of biological role, cardiac hormone which may function as a paracrine antifibrotic factor in the heart. Also plays a key role in cardiovascular homeostasis through natriuresis, diuresis, vasorelaxation, and inhibition of renin and aldosterone secretion. Has a cGMP-stimulating activity. In Takifugu rubripes (Japanese pufferfish), this protein is Brain natriuretic peptide (nppb).